A 240-amino-acid chain; its full sequence is UDP-2,3-diacylglucosamine hydrolase (240 aa).

Positions 8, 10, 41, 79, and 114 each coordinate Mn(2+). Residue 79–80 coordinates substrate; that stretch reads NR. 5 residues coordinate substrate: D122, S160, N164, K167, and H195. Positions 195 and 197 each coordinate Mn(2+).

Belongs to the LpxH family. Requires Mn(2+) as cofactor.

It localises to the cell inner membrane. The catalysed reaction is UDP-2-N,3-O-bis[(3R)-3-hydroxytetradecanoyl]-alpha-D-glucosamine + H2O = 2-N,3-O-bis[(3R)-3-hydroxytetradecanoyl]-alpha-D-glucosaminyl 1-phosphate + UMP + 2 H(+). The protein operates within glycolipid biosynthesis; lipid IV(A) biosynthesis; lipid IV(A) from (3R)-3-hydroxytetradecanoyl-[acyl-carrier-protein] and UDP-N-acetyl-alpha-D-glucosamine: step 4/6. Its function is as follows. Hydrolyzes the pyrophosphate bond of UDP-2,3-diacylglucosamine to yield 2,3-diacylglucosamine 1-phosphate (lipid X) and UMP by catalyzing the attack of water at the alpha-P atom. Involved in the biosynthesis of lipid A, a phosphorylated glycolipid that anchors the lipopolysaccharide to the outer membrane of the cell. The sequence is that of UDP-2,3-diacylglucosamine hydrolase from Pectobacterium atrosepticum (strain SCRI 1043 / ATCC BAA-672) (Erwinia carotovora subsp. atroseptica).